The chain runs to 456 residues: Chromosomal replication initiator protein DnaA 1 (456 aa).

Positions 1-68 are domain I, interacts with DnaA modulators; sequence MRAWEEFLLL…KANLINNNGK (68 aa). Positions 68-101 are domain II; it reads KPIRVRVTSLDKSTPFKESQIQQEKTAYFTMQYG. The tract at residues 102–320 is domain III, AAA+ region; sequence DIDPQMSFAN…HALTTLAKRV (219 aa). ATP is bound by residues S150, G152, K153, and T154. Residues 321–456 are domain IV, binds dsDNA; sequence AYKKLSHQLL…AYQSLDLIVD (136 aa).

Belongs to the DnaA family. In terms of assembly, oligomerizes as a right-handed, spiral filament on DNA at oriC.

The protein resides in the cytoplasm. Its function is as follows. Plays an essential role in the initiation and regulation of chromosomal replication. ATP-DnaA binds to the origin of replication (oriC) to initiate formation of the DNA replication initiation complex once per cell cycle. Binds the DnaA box (a 9 base pair repeat at the origin) and separates the double-stranded (ds)DNA. Forms a right-handed helical filament on oriC DNA; dsDNA binds to the exterior of the filament while single-stranded (ss)DNA is stabiized in the filament's interior. The ATP-DnaA-oriC complex binds and stabilizes one strand of the AT-rich DNA unwinding element (DUE), permitting loading of DNA polymerase. After initiation quickly degrades to an ADP-DnaA complex that is not apt for DNA replication. Binds acidic phospholipids. The polypeptide is Chromosomal replication initiator protein DnaA 1 (Chlamydia muridarum (strain MoPn / Nigg)).